Consider the following 522-residue polypeptide: 2-isopropylmalate synthase (522 aa).

The Pyruvate carboxyltransferase domain maps to 5 to 267; it reads VIIFDTTLRD…ETGINAKEIH (263 aa). Mn(2+) contacts are provided by Asp14, His202, His204, and Asn238. Residues 392–522 form a regulatory domain region; it reads QLQQLVVQSD…MQKNRELGGV (131 aa).

Belongs to the alpha-IPM synthase/homocitrate synthase family. LeuA type 1 subfamily. As to quaternary structure, homodimer. Requires Mn(2+) as cofactor.

It localises to the cytoplasm. The catalysed reaction is 3-methyl-2-oxobutanoate + acetyl-CoA + H2O = (2S)-2-isopropylmalate + CoA + H(+). Its pathway is amino-acid biosynthesis; L-leucine biosynthesis; L-leucine from 3-methyl-2-oxobutanoate: step 1/4. In terms of biological role, catalyzes the condensation of the acetyl group of acetyl-CoA with 3-methyl-2-oxobutanoate (2-ketoisovalerate) to form 3-carboxy-3-hydroxy-4-methylpentanoate (2-isopropylmalate). The polypeptide is 2-isopropylmalate synthase (Shewanella baltica (strain OS223)).